Here is a 270-residue protein sequence, read N- to C-terminus: L-fucose dehydrogenase (270 aa).

The NAD(+) site is built by arginine 19, isoleucine 21, aspartate 40, lysine 41, aspartate 62, valine 63, asparagine 89, tyrosine 154, lysine 158, isoleucine 187, threonine 189, and leucine 191. Tyrosine 154 (proton acceptor) is an active-site residue.

It belongs to the short-chain dehydrogenases/reductases (SDR) family. As to quaternary structure, homotetramer. Highly expressed in brain, placenta, liver and kidney.

Its subcellular location is the cytoplasm. The catalysed reaction is L-fucose + NAD(+) = L-fucono-1,5-lactone + NADH + H(+). It carries out the reaction D-arabinose + NAD(+) = D-arabinono-1,5-lactone + NADH + H(+). The enzyme catalyses L-galactose + NAD(+) = L-galactono-1,5-lactone + NADH + H(+). The protein operates within carbohydrate degradation; L-fucose degradation. Its function is as follows. Catalyzes the NAD(+)-dependent oxidation of L-fucose, yielding L-fucono-1,5-lactone, which rapidly converts spontaneously to L-fucone-1,4-lactone. Can also act on D-arabinose and L-galactose, with lower catalytic efficiency. Does not use NADPH. May be the initial enzyme of the L-fucose degradation pathway in mammals. This chain is L-fucose dehydrogenase, found in Homo sapiens (Human).